The chain runs to 341 residues: tRNA N6-adenosine threonylcarbamoyltransferase (341 aa).

The Fe cation site is built by His-111 and His-115. Residues 134–138 (LVSGG), Asp-167, Gly-180, and Asn-272 each bind substrate. A Fe cation-binding site is contributed by Asp-300.

This sequence belongs to the KAE1 / TsaD family. Fe(2+) serves as cofactor.

Its subcellular location is the cytoplasm. It carries out the reaction L-threonylcarbamoyladenylate + adenosine(37) in tRNA = N(6)-L-threonylcarbamoyladenosine(37) in tRNA + AMP + H(+). Functionally, required for the formation of a threonylcarbamoyl group on adenosine at position 37 (t(6)A37) in tRNAs that read codons beginning with adenine. Is involved in the transfer of the threonylcarbamoyl moiety of threonylcarbamoyl-AMP (TC-AMP) to the N6 group of A37, together with TsaE and TsaB. TsaD likely plays a direct catalytic role in this reaction. In Edwardsiella ictaluri (strain 93-146), this protein is tRNA N6-adenosine threonylcarbamoyltransferase.